The primary structure comprises 265 residues: 3-methyl-2-oxobutanoate hydroxymethyltransferase (265 aa).

Aspartate 41 and aspartate 80 together coordinate Mg(2+). 3-methyl-2-oxobutanoate contacts are provided by residues 41 to 42, aspartate 80, and lysine 110; that span reads DS. Glutamate 112 contributes to the Mg(2+) binding site. The active-site Proton acceptor is glutamate 179.

This sequence belongs to the PanB family. In terms of assembly, homodecamer; pentamer of dimers. It depends on Mg(2+) as a cofactor.

Its subcellular location is the cytoplasm. It carries out the reaction 3-methyl-2-oxobutanoate + (6R)-5,10-methylene-5,6,7,8-tetrahydrofolate + H2O = 2-dehydropantoate + (6S)-5,6,7,8-tetrahydrofolate. Its pathway is cofactor biosynthesis; (R)-pantothenate biosynthesis; (R)-pantoate from 3-methyl-2-oxobutanoate: step 1/2. Its function is as follows. Catalyzes the reversible reaction in which hydroxymethyl group from 5,10-methylenetetrahydrofolate is transferred onto alpha-ketoisovalerate to form ketopantoate. In Pseudothermotoga lettingae (strain ATCC BAA-301 / DSM 14385 / NBRC 107922 / TMO) (Thermotoga lettingae), this protein is 3-methyl-2-oxobutanoate hydroxymethyltransferase.